A 407-amino-acid chain; its full sequence is tRNA (guanine-N(7)-)-methyltransferase non-catalytic subunit wuho (407 aa).

WD repeat units follow at residues 83-124 (AIEV…ARLL), 171-210 (GHLSVVFDILWTDDQQHIITCDRDDKIRVTNYPATFDIHS), and 214-252 (GHKEFVSGLALLTEQHIVSSSGDKTLRVWNFIEGKELLI).

It belongs to the WD repeat TRM82 family. Forms a heterodimer with the catalytic subunit Mettl1. Interacts with mei-P26 and weakly interacts with bgcn; required for the function or formation of the mei-P26-bgcn-bam-sxl complex. Interacts with nanos; may be involved in mei-P26-dependent derepression of the BMP signaling pathway. Interacts with Myc; the interaction may be mediated by mei-P26 and may be involved in the regulation of ribosome biogenesis. In terms of tissue distribution, in testis, it is present at high level in hub cells, a niche for germline stem cells of testis. Ubiquitously expressed in all testicular cells throughout spermatogenesis. Ubiquitously expressed in all germline and somatic cells of the ovary.

It is found in the nucleus. The protein localises to the cytoplasm. The protein operates within tRNA modification; N(7)-methylguanine-tRNA biosynthesis. Required for the Mettl1-dependent formation of N(7)-methylguanine at position 46 (m7G46) in tRNA. In the Mettl1-wuho methyltransferase complex, it is required to stabilize and induce conformational changes of the catalytic subunit. Required for binding of nanos mRNA and repression of translation by the mei-P26-bgcn-bam-sxl complex. May cooperate with mei-P26 and nanos to derepress the BMP signaling pathway. May cooperate with mei-P26 to suppress expression of a subset of microRNAs. May cooperate with mei-P26 to regulate bam expression levels in germline cells during gametogenesis. Required to promote mitosis to meiosis transition during gametogenesis. May regulate germline cell division in part by regulating ribosome biogenesis. In Drosophila ananassae (Fruit fly), this protein is tRNA (guanine-N(7)-)-methyltransferase non-catalytic subunit wuho.